We begin with the raw amino-acid sequence, 86 residues long: UPF0386 protein RC1_1783 (86 aa).

It belongs to the UPF0386 family.

This Rhodospirillum centenum (strain ATCC 51521 / SW) protein is UPF0386 protein RC1_1783.